Reading from the N-terminus, the 567-residue chain is Dynein, 70 kDa intermediate chain, flagellar outer arm (567 aa).

WD repeat units follow at residues 214–254 (VPTS…GPVE), 261–302 (SHRD…ECVE), 360–399 (GHHGPIYGLRRNPFNSKYFLSIGDWTARVWVEDTAVKTPI), and 404–444 (YHPT…NEPT).

This sequence belongs to the dynein intermediate chain family. Consists of at least 3 heavy chains (alpha, beta and gamma), 2 intermediate chains and 8 light chains.

The protein resides in the cytoplasm. Its subcellular location is the cytoskeleton. It is found in the flagellum axoneme. Its function is as follows. May play a role in regulating dynein heavy chain (DHC) activity. May function in holding IC78 to the DHC, or in stabilizing the entire dynein complex. In Chlamydomonas reinhardtii (Chlamydomonas smithii), this protein is Dynein, 70 kDa intermediate chain, flagellar outer arm (ODA6).